Consider the following 201-residue polypeptide: Dephospho-CoA kinase (201 aa).

In terms of domain architecture, DPCK spans Trp-3 to Asn-201. Ala-11–Thr-16 serves as a coordination point for ATP.

Belongs to the CoaE family.

It is found in the cytoplasm. The catalysed reaction is 3'-dephospho-CoA + ATP = ADP + CoA + H(+). It participates in cofactor biosynthesis; coenzyme A biosynthesis; CoA from (R)-pantothenate: step 5/5. Functionally, catalyzes the phosphorylation of the 3'-hydroxyl group of dephosphocoenzyme A to form coenzyme A. This is Dephospho-CoA kinase from Bdellovibrio bacteriovorus (strain ATCC 15356 / DSM 50701 / NCIMB 9529 / HD100).